The following is a 295-amino-acid chain: Diaminopimelate epimerase (295 aa).

2 residues coordinate substrate: N13 and N69. C78 (proton donor) is an active-site residue. Substrate-binding positions include 79-80 (GN), N173, N212, and 230-231 (ER). C239 functions as the Proton acceptor in the catalytic mechanism. Residue 240–241 (GT) coordinates substrate.

This sequence belongs to the diaminopimelate epimerase family. In terms of assembly, homodimer.

It localises to the cytoplasm. It catalyses the reaction (2S,6S)-2,6-diaminopimelate = meso-2,6-diaminopimelate. The protein operates within amino-acid biosynthesis; L-lysine biosynthesis via DAP pathway; DL-2,6-diaminopimelate from LL-2,6-diaminopimelate: step 1/1. In terms of biological role, catalyzes the stereoinversion of LL-2,6-diaminopimelate (L,L-DAP) to meso-diaminopimelate (meso-DAP), a precursor of L-lysine. This Methanococcus aeolicus (strain ATCC BAA-1280 / DSM 17508 / OCM 812 / Nankai-3) protein is Diaminopimelate epimerase.